We begin with the raw amino-acid sequence, 462 residues long: A-type ATP synthase subunit B (462 aa).

This sequence belongs to the ATPase alpha/beta chains family. Has multiple subunits with at least A(3), B(3), C, D, E, F, H, I and proteolipid K(x).

It localises to the cell membrane. Its function is as follows. Component of the A-type ATP synthase that produces ATP from ADP in the presence of a proton gradient across the membrane. The B chain is a regulatory subunit. In Methanococcus maripaludis (strain C5 / ATCC BAA-1333), this protein is A-type ATP synthase subunit B.